Reading from the N-terminus, the 326-residue chain is Polycomb complex protein BMI-1 (326 aa).

An RING-type zinc finger spans residues 18-57 (CVLCGGYFIDATTIIECLHSFCKTCIVRYLETSKYCPICD). The short motif at 81–95 (KLVPGLFKNEMKRRR) is the Nuclear localization signal element. An interaction with PHC2 region spans residues 162–182 (RYLRCPAAMTVMHLRKFLRSK). Positions 164-228 (LRCPAAMTVM…GPLPLKYRVR (65 aa)) are interaction with E4F1. Positions 236 to 326 (IGHQREGLSN…INGSSATSSG (91 aa)) are disordered. A compositionally biased stretch (low complexity) spans 265–278 (LPSTSSCLPSPSTP). Residues 279–310 (VQSPHPQFPHISSTMNGTSSSPGSNHQSSFTN) are compositionally biased toward polar residues. Over residues 315–326 (SSINGSSATSSG) the composition is skewed to low complexity.

In terms of assembly, component of a PRC1-like complex.

It is found in the nucleus. It localises to the cytoplasm. Component of a Polycomb group (PcG) multiprotein PRC1-like complex, a complex class required to maintain the transcriptionally repressive state of many genes, including Hox genes, throughout development. PcG PRC1 complex acts via chromatin remodeling and modification of histones; it mediates monoubiquitination of histone H2A 'Lys-119', rendering chromatin heritably changed in its expressibility. In the PRC1-like complex, regulates the E3 ubiquitin-protein ligase activity of RNF2/RING2. This is Polycomb complex protein BMI-1 (BMI1) from Gallus gallus (Chicken).